A 419-amino-acid chain; its full sequence is tRNA(Ile)-lysidine synthase (419 aa).

25–30 (SGGIDS) is a binding site for ATP.

It belongs to the tRNA(Ile)-lysidine synthase family.

It localises to the cytoplasm. The catalysed reaction is cytidine(34) in tRNA(Ile2) + L-lysine + ATP = lysidine(34) in tRNA(Ile2) + AMP + diphosphate + H(+). Ligates lysine onto the cytidine present at position 34 of the AUA codon-specific tRNA(Ile) that contains the anticodon CAU, in an ATP-dependent manner. Cytidine is converted to lysidine, thus changing the amino acid specificity of the tRNA from methionine to isoleucine. This chain is tRNA(Ile)-lysidine synthase, found in Actinobacillus pleuropneumoniae serotype 7 (strain AP76).